Here is a 317-residue protein sequence, read N- to C-terminus: Long form salivary protein D7L2 (317 aa).

A signal peptide spans 1 to 20 (MYKLLVALHLILCTVSHVKT). Cystine bridges form between C39–C76, C72–C131, C181–C214, C195–C316, and C255–C266. Thromboxane A2 contacts are provided by W58 and Y73. Serotonin contacts are provided by E182, Y264, D281, D284, and M308.

It belongs to the PBP/GOBP family. Female salivary gland.

The protein resides in the secreted. Modulates blood feeding of female mosquitoes on vertebrate species by binding and sequestering different mediators involved in the host response, such as biogenic amines and eicosanoids. Binds serotonin with high affinity. Binds tryptamine, octopamine, dopamine and noradrenaline with low affinity. Binds leukotriene C4, leukotriene D4, leukotriene E4 and U-46619, a stable analog of thromboxane A2. Does not bind leukotriene B4, adrenaline, histamine and ADP. Inhibits platelet aggregation induced by low concentrations of collagen and arachidonic acid but not by ADP or adrenaline. The chain is Long form salivary protein D7L2 from Anopheles darlingi (Mosquito).